We begin with the raw amino-acid sequence, 539 residues long: GMP synthase [glutamine-hydrolyzing] (539 aa).

The Glutamine amidotransferase type-1 domain occupies 4-203; sequence KILILDFGSQ…VHDICGCKSD (200 aa). Cys-82 serves as the catalytic Nucleophile. Catalysis depends on residues His-177 and Glu-179. The GMPS ATP-PPase domain occupies 204-395; sequence WNMPDYIAEA…LGLPHDMVYR (192 aa). Residue 231–237 coordinates ATP; sequence SGGVDSS.

As to quaternary structure, homodimer.

The catalysed reaction is XMP + L-glutamine + ATP + H2O = GMP + L-glutamate + AMP + diphosphate + 2 H(+). Its pathway is purine metabolism; GMP biosynthesis; GMP from XMP (L-Gln route): step 1/1. Catalyzes the synthesis of GMP from XMP. This is GMP synthase [glutamine-hydrolyzing] from Janthinobacterium sp. (strain Marseille) (Minibacterium massiliensis).